Here is a 417-residue protein sequence, read N- to C-terminus: MIDSILFDLIEREVKREKENIELIASENFVSSDVRRAVGSILTNKYAEGYPSKRYYGGCFVVDDIESLAISRARELFGANYANVQPHSGSQANMAAIMALIKPGDRILGMELSHGGHLTHGSKVSFSGMFFDAYSYGVSRESEMIDYDDVRKIAKECRPNLIIAGASSYSREIDFKKFREIADEVSAYLLCDVAHTAGLIATGFHNSPIDVAHLTTSTTHKTLRGPRGGLILAGRESSIIVNYNNKERRLEDAVNSCVFPGTQGGPLMHVIAGKAVAFREALMEDFKDYISRVISNTKAMAECFISEGFRIVSGGTDNHLFLVDLGILGITGADAEKVLERVNITLNKNAIPFDSKNPSVTSGIRIGAAAITSRGLNRDDSIRVAHFVIRALKTKSEDELKKIKRDVIEFISSFDMP.

Residues Leu112 and 116–118 (GHL) each bind (6S)-5,6,7,8-tetrahydrofolate. Lys221 bears the N6-(pyridoxal phosphate)lysine mark. Glu247 lines the (6S)-5,6,7,8-tetrahydrofolate pocket.

The protein belongs to the SHMT family. Homodimer. It depends on pyridoxal 5'-phosphate as a cofactor.

Its subcellular location is the cytoplasm. The catalysed reaction is (6R)-5,10-methylene-5,6,7,8-tetrahydrofolate + glycine + H2O = (6S)-5,6,7,8-tetrahydrofolate + L-serine. Its pathway is one-carbon metabolism; tetrahydrofolate interconversion. It participates in amino-acid biosynthesis; glycine biosynthesis; glycine from L-serine: step 1/1. In terms of biological role, catalyzes the reversible interconversion of serine and glycine with tetrahydrofolate (THF) serving as the one-carbon carrier. This reaction serves as the major source of one-carbon groups required for the biosynthesis of purines, thymidylate, methionine, and other important biomolecules. Also exhibits THF-independent aldolase activity toward beta-hydroxyamino acids, producing glycine and aldehydes, via a retro-aldol mechanism. The polypeptide is Serine hydroxymethyltransferase (Borrelia hermsii (strain HS1 / DAH)).